The following is a 369-amino-acid chain: MDYDLLIKNGQTVNGMPVEIAIKEKKIAAVAATISGSAKETIHLEPGTYVSAGWIDDHVHCFEKMALYYDYPDEIGVKKGVTTVIDAGTTGAENIHEFYDLAQQAKTNVFGLVNISKWGIVAQDELADLSKVQASLVKKAIQELPDFVVGIKARMSRTVIGDNGITPLELAKQIQQENQEIPLMVHIGSAPPHLDEILALMEKGDVLTHCFNGKENGILDQATDKIKDFAWQAYNKGVVFDIGHGTDSFNFHVAETALREGMKAASISTDIYIRNRENGPVYDLATTMEKLRVVGYDWPEIIEKVTKAPAENFHLTQKGTLEIGKDADLTIFTIQAEEKTLTDSNGLTRVAKEQIRPIKTIIGGQIYDN.

Zn(2+)-binding residues include histidine 58, histidine 60, lysine 152, histidine 186, histidine 209, and aspartate 270. The residue at position 152 (lysine 152) is an N6-carboxylysine.

The protein belongs to the metallo-dependent hydrolases superfamily. Atu3266/EF_0837 deacetylase family. It depends on Zn(2+) as a cofactor.

Its function is as follows. Esterase that can catalyze the deacetylation of acetyl-(R)-mandelate, but with very low efficiency (in vitro). This chain is Deacetylase EF_0837, found in Enterococcus faecalis (strain ATCC 700802 / V583).